Here is a 63-residue protein sequence, read N- to C-terminus: Large ribosomal subunit protein uL29 (63 aa).

It belongs to the universal ribosomal protein uL29 family.

This is Large ribosomal subunit protein uL29 from Shewanella oneidensis (strain ATCC 700550 / JCM 31522 / CIP 106686 / LMG 19005 / NCIMB 14063 / MR-1).